A 688-amino-acid polypeptide reads, in one-letter code: Two-component response regulator ORR23 (688 aa).

The Response regulatory domain occupies 25-140 (RVLAVDDDPV…ELRNIWQHVI (116 aa)). Aspartate 76 bears the 4-aspartylphosphate mark. The segment at 161–212 (PPNADSDHVHGHVTCGSPDQSGRPSKKRKEYCSEEEDEGEVNTQDIDDPSAP) is disordered. The segment covering 193 to 208 (SEEEDEGEVNTQDIDD) has biased composition (acidic residues). Positions 211-270 (APKKPRVVWSVELHRKFVAAVNQLGIDKAVPKRILELMNVEKLTRENVASHLQKYRLYLK) form a DNA-binding region, myb-like GARP.

The protein belongs to the ARR family. Type-B subfamily. Post-translationally, two-component system major event consists of a His-to-Asp phosphorelay between a sensor histidine kinase (HK) and a response regulator (RR). In plants, the His-to-Asp phosphorelay involves an additional intermediate named Histidine-containing phosphotransfer protein (HPt). This multistep phosphorelay consists of a His-Asp-His-Asp sequential transfer of a phosphate group between first a His and an Asp of the HK protein, followed by the transfer to a conserved His of the HPt protein and finally the transfer to an Asp in the receiver domain of the RR protein.

The protein resides in the nucleus. Functionally, transcriptional activator that binds specific DNA sequence. Functions as a response regulator involved in His-to-Asp phosphorelay signal transduction system. Phosphorylation of the Asp residue in the receiver domain activates the ability of the protein to promote the transcription of target genes. May directly activate some type-A response regulators in response to cytokinins. The chain is Two-component response regulator ORR23 from Oryza sativa subsp. japonica (Rice).